Reading from the N-terminus, the 140-residue chain is Alpha-lactalbumin (140 aa).

The N-terminal stretch at 1 to 19 (MMSLLSLLLLGIALPATQA) is a signal peptide. The C-type lysozyme domain occupies 20–140 (IDYRKCQASQ…CIEDLDQWRC (121 aa)). Intrachain disulfides connect Cys-25-Cys-140, Cys-47-Cys-131, Cys-80-Cys-96, and Cys-92-Cys-110. An N-linked (GlcNAc...) asparagine glycan is attached at Asn-63. Residues Lys-98, Asp-101, Asp-103, Asp-106, and Asp-107 each contribute to the Ca(2+) site.

The protein belongs to the glycosyl hydrolase 22 family. As to quaternary structure, lactose synthase (LS) is a heterodimer of a catalytic component, beta1,4-galactosyltransferase (beta4Gal-T1) and a regulatory component, alpha-lactalbumin (LA). Mammary gland specific. Secreted in milk.

The protein resides in the secreted. Its function is as follows. Regulatory subunit of lactose synthase, changes the substrate specificity of galactosyltransferase in the mammary gland making glucose a good acceptor substrate for this enzyme. This enables LS to synthesize lactose, the major carbohydrate component of milk. In other tissues, galactosyltransferase transfers galactose onto the N-acetylglucosamine of the oligosaccharide chains in glycoproteins. The chain is Alpha-lactalbumin (LALBA) from Notamacropus eugenii (Tammar wallaby).